The following is a 1035-amino-acid chain: FERM domain-containing protein 4B (1035 aa).

Positions Arg59–Lys361 constitute an FERM domain. A Phosphoserine modification is found at Ser372. Coiled coils occupy residues Gln414 to Ile451 and Lys535 to Cys559. The segment at Val542–Tyr972 is necessary for adherens junction and tight junction localization. Disordered stretches follow at residues Pro563–Pro615, Asn631–Gln699, Phe713–Ser738, and Thr754–Gln798. Positions Pro571 to Asp590 are enriched in low complexity. Positions Asp594–Pro607 are enriched in polar residues. Ser609 is modified (phosphoserine). Over residues Met635–Leu644 the composition is skewed to basic and acidic residues. Composition is skewed to polar residues over residues Met664 to Gln699 and Leu715 to Glu725. Ser698 carries the post-translational modification Phosphoserine. Basic residues predominate over residues Arg762 to Ser771. Positions Val772–Asn782 are enriched in polar residues. A Glycyl lysine isopeptide (Lys-Gly) (interchain with G-Cter in SUMO2) cross-link involves residue Lys883. 3 disordered regions span residues Arg906–Gly926, Pro939–Ser958, and Pro994–Val1035. Polar residues predominate over residues Ala907–Phe921. Ser916 is subject to Phosphoserine. Residues Ser941–Ser958 are compositionally biased toward low complexity. Residues Ser1019 to Val1035 are compositionally biased toward basic and acidic residues. Lys1030 participates in a covalent cross-link: Glycyl lysine isopeptide (Lys-Gly) (interchain with G-Cter in SUMO2).

As to quaternary structure, interacts with CYTH3. Interacts with PARD3. Interacts with CYTH1. In terms of tissue distribution, isoform 1 is expressed in the brain. Isoform 2 is expressed in the lung (at protein level).

Its subcellular location is the cytoplasm. The protein localises to the cytoskeleton. It localises to the cell junction. The protein resides in the tight junction. It is found in the adherens junction. Member of GRP1 signaling complexes that are acutely recruited to plasma membrane ruffles in response to insulin receptor signaling. May function as a scaffolding protein that regulates epithelial cell polarity by connecting ARF6 activation with the PAR3 complex. Plays a redundant role with FRMD4A in epithelial polarization. This chain is FERM domain-containing protein 4B (Frmd4b), found in Mus musculus (Mouse).